The chain runs to 331 residues: Peroxidase 60 (331 aa).

The signal sequence occupies residues 1 to 26; sequence MAVKISTIEVLILSLALLSFGHGCYG. Intrachain disulfides connect Cys-37–Cys-113, Cys-70–Cys-75, Cys-119–Cys-321, and Cys-198–Cys-230. Residue His-68 is the Proton acceptor of the active site. Residues Asp-69, Gly-74, Asp-76, and Ser-78 each contribute to the Ca(2+) site. Pro-161 contributes to the substrate binding site. His-191 provides a ligand contact to heme b. Ca(2+) is bound at residue Thr-192. The N-linked (GlcNAc...) asparagine glycan is linked to Asn-245. The Ca(2+) site is built by Ser-248 and Asp-253.

The protein belongs to the peroxidase family. Classical plant (class III) peroxidase subfamily. Heme b is required as a cofactor. It depends on Ca(2+) as a cofactor. In terms of tissue distribution, expressed in roots, slightly in leaves.

It localises to the secreted. It carries out the reaction 2 a phenolic donor + H2O2 = 2 a phenolic radical donor + 2 H2O. Removal of H(2)O(2), oxidation of toxic reductants, biosynthesis and degradation of lignin, suberization, auxin catabolism, response to environmental stresses such as wounding, pathogen attack and oxidative stress. These functions might be dependent on each isozyme/isoform in each plant tissue. This is Peroxidase 60 (PER60) from Arabidopsis thaliana (Mouse-ear cress).